The following is a 461-amino-acid chain: Cysteine--tRNA ligase (461 aa).

Residue Cys28 coordinates Zn(2+). Residues 30–40 (VTIYDLCHIGH) carry the 'HIGH' region motif. Residues Cys211, His236, and Glu240 each coordinate Zn(2+). The short motif at 268 to 272 (KMSKS) is the 'KMSKS' region element. Position 271 (Lys271) interacts with ATP.

The protein belongs to the class-I aminoacyl-tRNA synthetase family. Monomer. Zn(2+) is required as a cofactor.

It localises to the cytoplasm. It catalyses the reaction tRNA(Cys) + L-cysteine + ATP = L-cysteinyl-tRNA(Cys) + AMP + diphosphate. This is Cysteine--tRNA ligase from Aliivibrio fischeri (strain ATCC 700601 / ES114) (Vibrio fischeri).